The primary structure comprises 236 residues: Sperm flagellar protein 1 (236 aa).

Positions 7-112 constitute a Calponin-homology (CH) domain; sequence EEALHQLYLW…VLIPLRQRLE (106 aa). Residues 118-177 form a disordered region; sequence RKQGIGSLQELAPQDGTDYMDVGLSQKARGEGVPDPQGRGQLREGRLPVPRPPGDSQALQ. The interval 183–236 is essential for homodimerization and microtubule bundling activity; that stretch reads ILQIAEKEQELLASQETVQVLQMKVRRLEHLLQLKNVRIEDLSRRLQQAERKQR.

In terms of assembly, homodimer. Interacts with actin, TJP1, CGN and CDH1.

The protein localises to the cytoplasm. Its subcellular location is the cell projection. It is found in the cilium. It localises to the flagellum. The protein resides in the cytoskeleton. The protein localises to the cilium axoneme. Its subcellular location is the apical cell membrane. It is found in the basolateral cell membrane. It localises to the stress fiber. The protein resides in the microvillus. The protein localises to the lamellipodium. Its subcellular location is the filopodium. Functionally, microtubule-associated protein involved in the stabilization of microtubules along the axis of migration during radial intercalation. Promotes the establishment and stabilization of an axis of microtubules required for the active migration of cells into the outer epithelium. Microtubule-associated protein that promotes microtubule bundling and stabilizes microtubules against depolymerization in response to cold shock. Essential for ciliary central apparatus formation which requires both its microtubule-binding and bundling activities and for ciliary localization of HYDIN and SPAG6 in ependymal cilia. Binds actin in intestinal epithelial cells (IECs), essential for IECs survival and contributes to formation of filopodia and lamellipodia in migrating IECs. Regulates planar cell polarity signaling pathway and asymmetric microtubule accumulation in ciliated epithelia. The sequence is that of Sperm flagellar protein 1 (SPEF1) from Bos taurus (Bovine).